The sequence spans 412 residues: Phytoene synthase, chloroplastic (412 aa).

This sequence belongs to the phytoene/squalene synthase family. As to quaternary structure, monomer. In terms of tissue distribution, expressed in roots, leaves, flower buds, sepals, petals, lips and lip crests.

It localises to the plastid. Its subcellular location is the chloroplast. The catalysed reaction is 2 (2E,6E,10E)-geranylgeranyl diphosphate = 15-cis-phytoene + 2 diphosphate. It participates in carotenoid biosynthesis; phytoene biosynthesis; all-trans-phytoene from geranylgeranyl diphosphate: step 1/1. In terms of biological role, catalyzes the reaction from prephytoene diphosphate to phytoene. This chain is Phytoene synthase, chloroplastic (PSY), found in Oncidium hybrid cultivar (Orchid).